Consider the following 62-residue polypeptide: Venom protein 51.1 (62 aa).

The N-terminal stretch at 1-25 is a signal peptide; it reads MKFFGILLIVTMVVLVMIATTYVES. Intrachain disulfides connect C32-C53, C39-C58, and C43-C60.

As to expression, expressed by the venom gland.

Its subcellular location is the secreted. Its function is as follows. Neurotoxin. Decreases the action potential of myelinated nerves in mice and frogs. The sequence is that of Venom protein 51.1 from Lychas mucronatus (Chinese swimming scorpion).